Here is a 336-residue protein sequence, read N- to C-terminus: Biotin synthase (336 aa).

A Radical SAM core domain is found at 55-288 (GEAASLHACS…RTIIKFAAGR (234 aa)). Positions 73, 77, and 80 each coordinate [4Fe-4S] cluster. The [2Fe-2S] cluster site is built by Cys-152, Cys-213, and Lys-283.

It belongs to the radical SAM superfamily. Biotin synthase family. As to quaternary structure, homodimer. [4Fe-4S] cluster is required as a cofactor. The cofactor is [2Fe-2S] cluster.

The enzyme catalyses (4R,5S)-dethiobiotin + (sulfur carrier)-SH + 2 reduced [2Fe-2S]-[ferredoxin] + 2 S-adenosyl-L-methionine = (sulfur carrier)-H + biotin + 2 5'-deoxyadenosine + 2 L-methionine + 2 oxidized [2Fe-2S]-[ferredoxin]. It functions in the pathway cofactor biosynthesis; biotin biosynthesis; biotin from 7,8-diaminononanoate: step 2/2. Its function is as follows. Catalyzes the conversion of dethiobiotin (DTB) to biotin by the insertion of a sulfur atom into dethiobiotin via a radical-based mechanism. This is Biotin synthase from Chlorobium limicola (strain DSM 245 / NBRC 103803 / 6330).